We begin with the raw amino-acid sequence, 229 residues long: Potassium/proton antiporter CemA (229 aa).

The next 3 membrane-spanning stretches (helical) occupy residues 6 to 26, 107 to 127, and 189 to 209; these read AFIP…ISLC, ILHF…SFWG, and ILSG…KYWI.

It belongs to the CemA family.

The protein localises to the plastid. It localises to the chloroplast inner membrane. It carries out the reaction K(+)(in) + H(+)(out) = K(+)(out) + H(+)(in). In terms of biological role, contributes to K(+)/H(+) antiport activity by supporting proton efflux to control proton extrusion and homeostasis in chloroplasts in a light-dependent manner to modulate photosynthesis. Prevents excessive induction of non-photochemical quenching (NPQ) under continuous-light conditions. Indirectly promotes efficient inorganic carbon uptake into chloroplasts. The sequence is that of Potassium/proton antiporter CemA from Nasturtium officinale (Watercress).